Consider the following 347-residue polypeptide: MRIEQELKLGFKDVLFRPKRSTLKSRSQVELTRDFTFKHSGRQWSGTPVIAANMDSVASFEMAAALAEHGVMTAVHKHYTVEQWAEFAKTADKKTLNNVFVSTGTSEAEFEKVKKIMALSEEFVFICIDIANGYSEHLVEFVQKVRAEFPTKVISAGNVVTGDMVEELILAGADIVKVGIGPGSVCTTRVKTGVGYPQLSAIIECGDAAHGLGGMIIGDGGCSCAGDVSKAFGGGADFVMLGGMLAGHSESGGEVVEQDGKQYMKFYGMSSQSAMDKHSGGVAKYRAAEGKTVLLPYRGSVHNTISDILGGVRSTCTYVGAAKLKELTKRTTFIRVQEQENNVFGKE.

108–131 (AEFEKVKKIMALSEEFVFICIDIA) is an NADP(+) binding site. Residues Gly181 and Gly183 each contribute to the K(+) site. The active-site Thioimidate intermediate is the Cys186. Residue 216–239 (IIGDGGCSCAGDVSKAFGGGADFV) participates in NADP(+) binding.

The protein belongs to the IMPDH/GMPR family. GuaC type 1 subfamily. In terms of assembly, homotetramer.

The catalysed reaction is IMP + NH4(+) + NADP(+) = GMP + NADPH + 2 H(+). Catalyzes the irreversible NADPH-dependent deamination of GMP to IMP. It functions in the conversion of nucleobase, nucleoside and nucleotide derivatives of G to A nucleotides, and in maintaining the intracellular balance of A and G nucleotides. The chain is GMP reductase from Vibrio atlanticus (strain LGP32) (Vibrio splendidus (strain Mel32)).